Reading from the N-terminus, the 799-residue chain is Cadherin-8 (799 aa).

A signal peptide spans 1–29 (MPERLAEMLLDLWTPLIILWITLPPCIYM). The propeptide occupies 30–61 (APMNQSQVLMSGSPLELNSLGEEQRILNRSKR). Asparagine 33 and asparagine 57 each carry an N-linked (GlcNAc...) asparagine glycan. Cadherin domains lie at 62–167 (GWVW…APEF), 168–276 (LNGP…PPKF), 277–391 (AQSL…PPVF), 392–494 (SSPT…DNAP), and 495–616 (EFAS…YVLP). Residues 62–621 (GWVWNQMFVL…AYVLPIGLSM (560 aa)) are Extracellular-facing. An N-linked (GlcNAc...) asparagine glycan is attached at asparagine 188. N-linked (GlcNAc...) asparagine glycosylation is found at asparagine 463, asparagine 473, and asparagine 544. The chain crosses the membrane as a helical span at residues 622–642 (GALIAILACIILLLVIVVLFV). Over 643 to 799 (TLRRHKNEPL…YSVGESDKET (157 aa)) the chain is Cytoplasmic. Phosphoserine is present on serine 795.

Mainly expressed in brain. Found in certain nerve cell lines, such as retinoblasts, glioma cells and neuroblasts.

The protein resides in the cell membrane. Functionally, cadherins are calcium-dependent cell adhesion proteins. They preferentially interact with themselves in a homophilic manner in connecting cells; cadherins may thus contribute to the sorting of heterogeneous cell types. The protein is Cadherin-8 (CDH8) of Homo sapiens (Human).